The chain runs to 907 residues: Valine--tRNA ligase (907 aa).

A 'HIGH' region motif is present at residues 45-55 (PNVTGSLHMGH). A 'KMSKS' region motif is present at residues 554 to 558 (KMSKS). Lysine 557 is an ATP binding site. The stretch at 838–870 (GQLIDLEAERARLMKDVSKIEQDIEKLSAKLSN) forms a coiled coil.

The protein belongs to the class-I aminoacyl-tRNA synthetase family. ValS type 1 subfamily. In terms of assembly, monomer.

It localises to the cytoplasm. It carries out the reaction tRNA(Val) + L-valine + ATP = L-valyl-tRNA(Val) + AMP + diphosphate. Its function is as follows. Catalyzes the attachment of valine to tRNA(Val). As ValRS can inadvertently accommodate and process structurally similar amino acids such as threonine, to avoid such errors, it has a 'posttransfer' editing activity that hydrolyzes mischarged Thr-tRNA(Val) in a tRNA-dependent manner. The protein is Valine--tRNA ligase of Bartonella henselae (strain ATCC 49882 / DSM 28221 / CCUG 30454 / Houston 1) (Rochalimaea henselae).